We begin with the raw amino-acid sequence, 537 residues long: Intercellular adhesion molecule 1 (537 aa).

Positions 1 to 27 (MASTRAKPTLPLLLALVTVVIPGPGDA) are cleaved as a signal peptide. At 28–485 (QVSIHPREAF…LTVLYHSQNN (458 aa)) the chain is on the extracellular side. 2 consecutive Ig-like C2-type domains span residues 41–102 (GGSV…QSSA) and 127–195 (GKDL…LDLR). N-linked (GlcNAc...) asparagine glycosylation occurs at asparagine 47. 3 disulfide bridges follow: cysteine 48-cysteine 91, cysteine 52-cysteine 95, and cysteine 134-cysteine 188. A Cell attachment site; atypical motif is present at residues 151-153 (RGE). The Cell attachment site signature appears at 179–181 (RGD). N-linked (GlcNAc...) asparagine glycosylation is found at asparagine 185, asparagine 204, asparagine 267, asparagine 311, asparagine 362, asparagine 388, asparagine 409, asparagine 456, and asparagine 469. The 68-residue stretch at 232-299 (GTQQKLFCSL…LRCVLELADQ (68 aa)) folds into the Ig-like C2-type 3 domain. Cysteine 239 and cysteine 292 are oxidised to a cystine. The 55-residue stretch at 327 to 381 (GSQVTVKCEAHSGSKVVLLSGVEPRPPTPQVQFTLNASSEDHKRSFFCSAALEVA) folds into the Ig-like C2-type 4 domain. Cysteine 334 and cysteine 374 are oxidised to a cystine. 3 disulfides stabilise this stretch: cysteine 406–cysteine 422, cysteine 422–cysteine 461, and cysteine 434–cysteine 461. In terms of domain architecture, Ig-like C2-type 5 spans 415-468 (GSQQTLKCQAWGNPSPKMTCRRKADGALLPIGVVKSVKQEMNGTYVCHAFSSHG). A helical transmembrane segment spans residues 486-509 (WTIIILVPVLLVIVGLVMAASYVY). Over 510 to 537 (NRQRKIRIYKLQKAQEEAIKLKGQAPPP) the chain is Cytoplasmic.

It belongs to the immunoglobulin superfamily. ICAM family. In terms of assembly, homodimer. Interacts with MUC1 and promotes cell aggregation in epithelial cells. Interacts with ARHGEF26/SGEF. Interacts (on T cell side) with CD81, CD247 and CD9 at immunological synapses between antigen-presenting cells and T cells. In terms of processing, monoubiquitinated, which is promoted by MARCH9 and leads to endocytosis. As to expression, expressed at low level on a subpopulation of lymphocytes, macrophages, and endothelial cells, but is strongly induced on these cells, and on fibroblasts and epithelial cells.

The protein resides in the membrane. In terms of biological role, ICAM proteins are ligands for the leukocyte adhesion protein LFA-1 (integrin alpha-L/beta-2). During leukocyte trans-endothelial migration, ICAM1 engagement promotes the assembly of endothelial apical cups through ARHGEF26/SGEF and RHOG activation. The polypeptide is Intercellular adhesion molecule 1 (Icam1) (Mus musculus (Mouse)).